Reading from the N-terminus, the 492-residue chain is MNRIRIHVLPTNRGRITPVPRSQEPLSCAFTHRPCSHPRLEGQEFCIKHILEDKNAPFKQCSYISTKNGKRCPNAAPKPEKKDGVSFCAEHVRRNALALHAQMKKTNPGPVGETLLCQLSSYAKTELGSQTPESSRSEASRILDEDSWSDGEQEPITVDQTWRGDPDSEADSIDSDQEDPLKHAGVYTAEEVALIMREKLIRLQSLYIDQFKRLQHLLKEKKRRYLHNRKVEHEALGSSLLTGPEGLLAKERENLKRLKCLRRYRQRYGVEALLHRQLKERRMLATDGAAQQAHTTRSSQRCLAFVDDVRCSNQSLPMTRHCLTHICQDTNQVLFKCCQGSEEVPCNKPVPVSLSEDPCCPLHFQLPPQMYKPEQVLSVPDDLEAGPMDLYLSAAELQPTESLPLEFSDDLDVVGDGMQCPPSPLLFDPSLTLEDHLVKEIAEDPVDILGQMQMAGDGCRSQGSRNSEKASAPLSQSGLATANGKPEPTSIS.

Residue Lys-78 forms a Glycyl lysine isopeptide (Lys-Gly) (interchain with G-Cter in SUMO2) linkage. A disordered region spans residues 126–182 (ELGSQTPESSRSEASRILDEDSWSDGEQEPITVDQTWRGDPDSEADSIDSDQEDPLK). Thr-131 carries the phosphothreonine modification. The segment covering 135–144 (SRSEASRILD) has biased composition (basic and acidic residues). Residues Ser-147, Ser-149, Ser-168, Ser-172, and Ser-175 each carry the phosphoserine modification. Over residues 167 to 178 (DSEADSIDSDQE) the composition is skewed to acidic residues. A required for interaction with other NSL complex members region spans residues 308 to 364 (DVRCSNQSLPMTRHCLTHICQDTNQVLFKCCQGSEEVPCNKPVPVSLSEDPCCPLHF). Residues 455–492 (AGDGCRSQGSRNSEKASAPLSQSGLATANGKPEPTSIS) are disordered.

In terms of assembly, component of the NSL complex at least composed of KAT8/MOF, KANSL1, KANSL2, KANSL3, MCRS1, PHF20, OGT1/OGT, WDR5 and HCFC1.

The protein localises to the nucleus. It is found in the mitochondrion. Its function is as follows. Non-catalytic component of the NSL histone acetyltransferase complex, a multiprotein complex that mediates histone H4 acetylation at 'Lys-5'- and 'Lys-8' (H4K5ac and H4K8ac) at transcription start sites and promotes transcription initiation. Required for NSL complex stability and for transcription of intraciliary transport genes in both ciliated and non-ciliated cells by regulating histone H4 acetylation at 'Lys-5'- and 'Lys-12' (H4K5ac and H4K12ac). This is necessary for cilium assembly in ciliated cells and for organization of the microtubule cytoskeleton in non-ciliated cells. Required within the NSL complex to maintain nuclear architecture stability by promoting KAT8-mediated acetylation of lamin LMNA. The polypeptide is KAT8 regulatory NSL complex subunit 2 (KANSL2) (Homo sapiens (Human)).